Consider the following 90-residue polypeptide: uncharacterized protein (90 aa).

2 helical membrane passes run 17–37 (ILSM…IYLV) and 55–75 (ICFG…WGIA).

It is found in the membrane. This is an uncharacterized protein from Schizosaccharomyces pombe (strain 972 / ATCC 24843) (Fission yeast).